The primary structure comprises 239 residues: Small ribosomal subunit protein uS2 (239 aa).

The protein belongs to the universal ribosomal protein uS2 family.

This chain is Small ribosomal subunit protein uS2, found in Synechococcus sp. (strain WH7803).